A 159-amino-acid polypeptide reads, in one-letter code: Ribosomal RNA large subunit methyltransferase H (159 aa).

S-adenosyl-L-methionine-binding positions include I76, G108, and 127–132; that span reads FSKMTF.

This sequence belongs to the RNA methyltransferase RlmH family. As to quaternary structure, homodimer.

It is found in the cytoplasm. The enzyme catalyses pseudouridine(1915) in 23S rRNA + S-adenosyl-L-methionine = N(3)-methylpseudouridine(1915) in 23S rRNA + S-adenosyl-L-homocysteine + H(+). Specifically methylates the pseudouridine at position 1915 (m3Psi1915) in 23S rRNA. This Clostridium botulinum (strain Loch Maree / Type A3) protein is Ribosomal RNA large subunit methyltransferase H.